An 895-amino-acid polypeptide reads, in one-letter code: La RNA-binding domain-containing protein LHP1 (895 aa).

Disordered regions lie at residues 24–265 (ANGN…PPPS), 285–344 (SATS…HDAT), 359–590 (GEDK…LGHG), 796–857 (PDAA…AQDV), and 870–895 (VNGE…NYEQ). The segment covering 31–75 (SSPSSSSSATPEPTSLSSSTSGKKAFSTATSKSGQQKQGSSPQPG) has biased composition (low complexity). The span at 95–143 (QRTDRSEEKEKRGSSSKNWRERSHRDEKNQDDGEKRNGRERSKKEKGDK) shows a compositional bias: basic and acidic residues. Over residues 152–170 (SATSSEKTAKSLSSSTKNA) the composition is skewed to low complexity. Composition is skewed to polar residues over residues 172-184 (GVTS…NPIA) and 192-216 (KAQN…STIN). The segment covering 228-244 (DNWRARPAKVEKNEKTE) has biased composition (basic and acidic residues). Positions 251–260 (QAQPQPQRQL) are enriched in low complexity. A compositionally biased stretch (basic and acidic residues) spans 296–314 (KSDKEKSLTNGMVKEEDSG). Positions 325-336 (AAAAAAAGTSST) are enriched in low complexity. Composition is skewed to basic and acidic residues over residues 359-371 (GEDK…ERLN), 405-428 (HAAE…REGG), 452-468 (EGKK…DGHA), and 485-495 (GDVKETKEGDA). Positions 496–508 (RSASQQESSSHRS) are enriched in low complexity. Polar residues predominate over residues 510–521 (PSISASANTGID). Residues 563–572 (RGSFGGGRAR) show a composition bias toward gly residues. Residues 706–796 (VPNLDPLRFY…GAESHRWVLP (91 aa)) enclose the HTH La-type RNA-binding domain. S847 is subject to Phosphoserine. Positions 873-884 (EIKEKEEVKAME) are enriched in basic and acidic residues. Positions 885 to 895 (NEGEESENYEQ) are enriched in acidic residues.

In terms of biological role, may act as an RNA-binding protein. The sequence is that of La RNA-binding domain-containing protein LHP1 from Cryptococcus neoformans var. grubii serotype A (strain H99 / ATCC 208821 / CBS 10515 / FGSC 9487) (Filobasidiella neoformans var. grubii).